The chain runs to 446 residues: NADH-ubiquinone oxidoreductase chain 4 (446 aa).

Transmembrane regions (helical) follow at residues Ile-4–Val-24, Met-56–Ser-76, Ile-93–Tyr-113, Leu-114–Pro-134, Val-141–Val-161, Leu-182–Leu-202, Pro-212–Leu-232, Tyr-245–Leu-265, Ala-272–Met-292, Leu-297–Leu-317, Met-330–Leu-350, Ile-373–Ala-393, and Leu-426–Leu-446.

It belongs to the complex I subunit 4 family.

The protein localises to the mitochondrion membrane. The enzyme catalyses a ubiquinone + NADH + 5 H(+)(in) = a ubiquinol + NAD(+) + 4 H(+)(out). In terms of biological role, core subunit of the mitochondrial membrane respiratory chain NADH dehydrogenase (Complex I) that is believed to belong to the minimal assembly required for catalysis. Complex I functions in the transfer of electrons from NADH to the respiratory chain. The immediate electron acceptor for the enzyme is believed to be ubiquinone. In Drosophila yakuba (Fruit fly), this protein is NADH-ubiquinone oxidoreductase chain 4 (mt:ND4).